Reading from the N-terminus, the 942-residue chain is Mitogen-activated protein kinase kinase kinase 14 (942 aa).

Residues 136–152 (GKRHGKARKKRRKKRSK) are compositionally biased toward basic residues. Disordered regions lie at residues 136–156 (GKRH…SLAQ) and 291–326 (VSGQ…SCPS). The region spanning 402–657 (MTHQPRVGRG…ELRRKVGKAL (256 aa)) is the Protein kinase domain. The tract at residues 403–655 (THQPRVGRGS…AMELRRKVGK (253 aa)) is interaction with ZFP91. Residues 408 to 416 (VGRGSFGEV) and Lys431 each bind ATP. Asp517 functions as the Proton acceptor in the catalytic mechanism. The residue at position 561 (Thr561) is a Phosphothreonine. Disordered regions lie at residues 660–756 (VGGL…FPDR) and 801–823 (SDDS…SSGV). The segment covering 707 to 720 (EPQPPLPPEPPEPS) has biased composition (pro residues). Over residues 809-823 (SKASQSSRDTLSSGV) the composition is skewed to polar residues.

The protein belongs to the protein kinase superfamily. STE Ser/Thr protein kinase family. MAP kinase kinase kinase subfamily. As to quaternary structure, interacts with TRAF2, TRAF3, TRAF5, TRAF6, IKKA and NF-kappa-B2/P100. Interacts with PELI3. Interacts with NIBP; the interaction is direct. Interacts with ARRB1 and ARRB2. Interacts with GRB10. Interacts with ZFP91. Interacts with NLRP12; this interaction promotes proteasomal degradation of MAP3K14. Directly interacts with DDX3X. Interacts (via C-terminus and kinase domain) with PPPC3A (via N-terminus) and PPP3CB. In terms of processing, phosphorylation at Thr-561 is required to activate its kinase activity and 'Lys-63'-linked polyubiquitination. Phosphorylated by CHUK/IKKA leading to MAP3K14 destabilization. Autophosphorylated. Post-translationally, ubiquitinated. Undergoes both 'Lys-48'- and 'Lys-63'-linked polyubiquitination. 'Lys-48'-linked polyubiquitination leads to its degradation by the proteasome, while 'Lys-63'-linked polyubiquitination stabilizes and activates it.

Its subcellular location is the cytoplasm. The enzyme catalyses L-seryl-[protein] + ATP = O-phospho-L-seryl-[protein] + ADP + H(+). It carries out the reaction L-threonyl-[protein] + ATP = O-phospho-L-threonyl-[protein] + ADP + H(+). Functionally, lymphotoxin beta-activated kinase which seems to be exclusively involved in the activation of NF-kappa-B and its transcriptional activity. Phosphorylates CHUK/IKKA. Promotes proteolytic processing of NFKB2/P100, which leads to activation of NF-kappa-B via the non-canonical pathway. Has an essential role in the non-canonical NF-kappa-B signalining that regulates genes encoding molecules involved in B-cell survival, lymphoid organogenesis, and immune response. Could act in a receptor-selective manner. This is Mitogen-activated protein kinase kinase kinase 14 from Mus musculus (Mouse).